The sequence spans 430 residues: Xaa-Pro aminopeptidase (430 aa).

Mn(2+) is bound by residues Asp254, Asp265, His348, Glu377, and Glu400.

This sequence belongs to the peptidase M24B family. As to quaternary structure, homotetramer. Mn(2+) is required as a cofactor.

The catalysed reaction is Release of any N-terminal amino acid, including proline, that is linked to proline, even from a dipeptide or tripeptide.. In Haemophilus influenzae (strain ATCC 51907 / DSM 11121 / KW20 / Rd), this protein is Xaa-Pro aminopeptidase (pepP).